The following is a 251-amino-acid chain: MFKVVICDDERIIRQGLKQMIPWKEYHFTTIYTATDGVEALSLIRQHQPELVITDIRMPRKNGVDLLDDIKDLDCQVIILSSYDDFEYMKAGIQHHVLDYLLKPVDHTQLEHILDILVQRLLERPHSTNDDAAYYTAFQPLLKIDYDDYYVNQILSQIKQHYHKKVTVLDLINPIVVSESYAMRTFKEHVGITIVDYLNRYRILKSLHLLDQHYKHYEIAEKVGFSEYKMFCYHFKKYLHMSPSDYNKLSK.

Residues 3-118 (KVVICDDERI…QLEHILDILV (116 aa)) enclose the Response regulatory domain. 4-aspartylphosphate is present on aspartate 55. In terms of domain architecture, HTH araC/xylS-type spans 152–249 (NQILSQIKQH…HMSPSDYNKL (98 aa)). DNA-binding regions (H-T-H motif) lie at residues 169-190 (LDLI…KEHV) and 216-239 (HYEI…KKYL).

Post-translationally, phosphorylated by SE_0166.

Its subcellular location is the cytoplasm. Its function is as follows. Probable member of the two-component regulatory system SE_0166/SE_0165. This is an uncharacterized protein from Staphylococcus epidermidis (strain ATCC 12228 / FDA PCI 1200).